A 618-amino-acid chain; its full sequence is Matrix metalloproteinase-24 (618 aa).

The first 41 residues, 1–41 (MPRSRGGRAAPGQAARWSGWRAPGRLLPLLPALCCLAAAAG), serve as a signal peptide directing secretion. The propeptide occupies 42 to 128 (AGKPAGADAP…HLSRRRRNKR (87 aa)). The Extracellular segment spans residues 42–575 (AGKPAGADAP…IDDVPGSVNA (534 aa)). A Cysteine switch motif is present at residues 110 to 117 (PRCGVPDH). Zn(2+) contacts are provided by C112 and H255. Residue E256 is part of the active site. Positions 259 and 265 each coordinate Zn(2+). The segment at 296–352 (QKIYGPPAEPLEPTRPLPTLPVRRIHSPSERKHERQPRPPRPPLGDRPSTPGAKPNI) is disordered. Residues 302–314 (PAEPLEPTRPLPT) are compositionally biased toward pro residues. Residues 322-332 (SPSERKHERQP) show a composition bias toward basic and acidic residues. 4 Hemopexin repeats span residues 350-398 (PNIC…WKGL), 399-444 (PARI…GSCL), 446-494 (REGI…KGIP), and 495-542 (QAPQ…WMGC). An intrachain disulfide couples C353 to C542. A helical transmembrane segment spans residues 576 to 596 (VAVVVPCTLSLCLLVLLYTIF). Residues 597-618 (QFKNKTGPQPVTYYKRPVQEWV) lie on the Cytoplasmic side of the membrane. The PDZ-binding motif lies at 616–618 (EWV).

This sequence belongs to the peptidase M10A family. Interacts (via PDZ-binding motif) with APBA3 (via PDZ domain). Interacts with GRIP1 and GRIP2. Requires Zn(2+) as cofactor. Ca(2+) is required as a cofactor. In terms of processing, cleaved by a furin endopeptidase in the trans-Golgi network. As to expression, predominantly expressed in the nervous system: while enriched in the central nervous system, expression is also detected in the peripheral nervous system, including the trigeminal ganglion. Expression is not restricted to the nervous system: it is also enriched in the thymus, with a lower level of expression present in the aorta. In brain, high expression is present in the brain parenchyma, particularly within the neocortex.

The protein resides in the cell membrane. The protein localises to the golgi apparatus. It localises to the trans-Golgi network membrane. It is found in the secreted. Its subcellular location is the extracellular space. The protein resides in the extracellular matrix. Functionally, metalloprotease that mediates cleavage of N-cadherin (CDH2) and acts as a regulator of neuro-immune interactions and neural stem cell quiescence. Involved in cell-cell interactions between nociceptive neurites and mast cells, possibly by mediating cleavage of CDH2, thereby acting as a mediator of peripheral thermal nociception and inflammatory hyperalgesia. Key regulator of neural stem cells quiescence by mediating cleavage of CDH2, affecting CDH2-mediated anchorage of neural stem cells to ependymocytes in the adult subependymal zone, leading to modulate their quiescence. May play a role in axonal growth. Able to activate progelatinase A. May also be a proteoglycanase involved in degradation of proteoglycans, such as dermatan sulfate and chondroitin sulfate proteoglycans. Cleaves partially fibronectin, but not collagen type I, nor laminin. This is Matrix metalloproteinase-24 (Mmp24) from Rattus norvegicus (Rat).